We begin with the raw amino-acid sequence, 490 residues long: Acetyl-coenzyme A carboxylase carboxyl transferase subunit beta, chloroplastic (490 aa).

One can recognise a CoA carboxyltransferase N-terminal domain in the interval 228-490 (LWVQCENCYG…FKLHAFFPLN (263 aa)). Positions 232, 235, 251, and 254 each coordinate Zn(2+). A C4-type zinc finger spans residues 232 to 254 (CENCYGLNYKKLLKSKMNICDQC).

Belongs to the AccD/PCCB family. As to quaternary structure, acetyl-CoA carboxylase is a heterohexamer composed of biotin carboxyl carrier protein, biotin carboxylase and 2 subunits each of ACCase subunit alpha and ACCase plastid-coded subunit beta (accD). Zn(2+) serves as cofactor.

It is found in the plastid. The protein resides in the chloroplast stroma. The catalysed reaction is N(6)-carboxybiotinyl-L-lysyl-[protein] + acetyl-CoA = N(6)-biotinyl-L-lysyl-[protein] + malonyl-CoA. Its pathway is lipid metabolism; malonyl-CoA biosynthesis; malonyl-CoA from acetyl-CoA: step 1/1. In terms of biological role, component of the acetyl coenzyme A carboxylase (ACC) complex. Biotin carboxylase (BC) catalyzes the carboxylation of biotin on its carrier protein (BCCP) and then the CO(2) group is transferred by the transcarboxylase to acetyl-CoA to form malonyl-CoA. The sequence is that of Acetyl-coenzyme A carboxylase carboxyl transferase subunit beta, chloroplastic from Eucalyptus globulus subsp. globulus (Tasmanian blue gum).